The sequence spans 255 residues: Glutamate racemase (255 aa).

Residues 7-8 (DS) and 39-40 (YG) contribute to the substrate site. Catalysis depends on C70, which acts as the Proton donor/acceptor. 71-72 (NT) contacts substrate. C181 functions as the Proton donor/acceptor in the catalytic mechanism. Residue 182 to 183 (TH) participates in substrate binding.

Belongs to the aspartate/glutamate racemases family.

The catalysed reaction is L-glutamate = D-glutamate. Its pathway is cell wall biogenesis; peptidoglycan biosynthesis. Functionally, provides the (R)-glutamate required for cell wall biosynthesis. The protein is Glutamate racemase of Helicobacter pylori (strain ATCC 700392 / 26695) (Campylobacter pylori).